A 252-amino-acid polypeptide reads, in one-letter code: Imidazole glycerol phosphate synthase subunit HisF (252 aa).

Active-site residues include Asp-12 and Asp-131.

The protein belongs to the HisA/HisF family. In terms of assembly, heterodimer of HisH and HisF.

It is found in the cytoplasm. The catalysed reaction is 5-[(5-phospho-1-deoxy-D-ribulos-1-ylimino)methylamino]-1-(5-phospho-beta-D-ribosyl)imidazole-4-carboxamide + L-glutamine = D-erythro-1-(imidazol-4-yl)glycerol 3-phosphate + 5-amino-1-(5-phospho-beta-D-ribosyl)imidazole-4-carboxamide + L-glutamate + H(+). It participates in amino-acid biosynthesis; L-histidine biosynthesis; L-histidine from 5-phospho-alpha-D-ribose 1-diphosphate: step 5/9. In terms of biological role, IGPS catalyzes the conversion of PRFAR and glutamine to IGP, AICAR and glutamate. The HisF subunit catalyzes the cyclization activity that produces IGP and AICAR from PRFAR using the ammonia provided by the HisH subunit. The sequence is that of Imidazole glycerol phosphate synthase subunit HisF from Thermus thermophilus (strain ATCC 27634 / DSM 579 / HB8).